The sequence spans 724 residues: Ribosomal RNA large subunit methyltransferase K/L (724 aa).

Residues 42 to 153 form the THUMP domain; that stretch reads DAQRLVLWSR…KGRATLSVDL (112 aa).

Belongs to the methyltransferase superfamily. RlmKL family.

The protein resides in the cytoplasm. The enzyme catalyses guanosine(2445) in 23S rRNA + S-adenosyl-L-methionine = N(2)-methylguanosine(2445) in 23S rRNA + S-adenosyl-L-homocysteine + H(+). It carries out the reaction guanosine(2069) in 23S rRNA + S-adenosyl-L-methionine = N(2)-methylguanosine(2069) in 23S rRNA + S-adenosyl-L-homocysteine + H(+). Its function is as follows. Specifically methylates the guanine in position 2445 (m2G2445) and the guanine in position 2069 (m7G2069) of 23S rRNA. In Xylella fastidiosa (strain M23), this protein is Ribosomal RNA large subunit methyltransferase K/L.